We begin with the raw amino-acid sequence, 302 residues long: RuBisCO operon transcriptional regulator (302 aa).

The HTH lysR-type domain occupies 1-60; the sequence is MHVSLRQLRVFEAVARHNSYTRAAEELHLSQPAVSMQVRQLEDEIGLSLFERLGKQVVLT. Positions 20–39 form a DNA-binding region, H-T-H motif; that stretch reads YTRAAEELHLSQPAVSMQVR.

Belongs to the LysR transcriptional regulatory family.

In terms of biological role, trans-acting transcriptional regulator of RuBisCO genes (rbcAB) expression. In Allochromatium vinosum (Chromatium vinosum), this protein is RuBisCO operon transcriptional regulator (rbcR).